Reading from the N-terminus, the 432-residue chain is Amino-acid acetyltransferase (432 aa).

The N-acetyltransferase domain maps to 286-425 (EVVREASIED…ASLYNYQRNS (140 aa)).

It belongs to the acetyltransferase family. ArgA subfamily.

It localises to the cytoplasm. It carries out the reaction L-glutamate + acetyl-CoA = N-acetyl-L-glutamate + CoA + H(+). Its pathway is amino-acid biosynthesis; L-arginine biosynthesis; N(2)-acetyl-L-ornithine from L-glutamate: step 1/4. This Pseudomonas putida (strain GB-1) protein is Amino-acid acetyltransferase.